Consider the following 488-residue polypeptide: 3-octaprenyl-4-hydroxybenzoate carboxy-lyase (488 aa).

Position 172 (asparagine 172) interacts with Mn(2+). Residues 175 to 177 (IYR), 189 to 191 (RWL), and 194 to 195 (RG) each bind prenylated FMN. Glutamate 238 lines the Mn(2+) pocket. Residue aspartate 287 is the Proton donor of the active site.

Belongs to the UbiD family. As to quaternary structure, homohexamer. The cofactor is prenylated FMN. Mn(2+) is required as a cofactor.

Its subcellular location is the cell membrane. It catalyses the reaction a 4-hydroxy-3-(all-trans-polyprenyl)benzoate + H(+) = a 2-(all-trans-polyprenyl)phenol + CO2. The protein operates within cofactor biosynthesis; ubiquinone biosynthesis. Catalyzes the decarboxylation of 3-octaprenyl-4-hydroxy benzoate to 2-octaprenylphenol, an intermediate step in ubiquinone biosynthesis. This Pseudomonas putida (strain W619) protein is 3-octaprenyl-4-hydroxybenzoate carboxy-lyase.